We begin with the raw amino-acid sequence, 360 residues long: Probable dual-specificity RNA methyltransferase RlmN (360 aa).

Residue glutamate 91 is the Proton acceptor of the active site. In terms of domain architecture, Radical SAM core spans 97–335 (QHYGQSVCVT…CVVRQEHGTD (239 aa)). Cysteine 104 and cysteine 340 are oxidised to a cystine. 3 residues coordinate [4Fe-4S] cluster: cysteine 111, cysteine 115, and cysteine 118. S-adenosyl-L-methionine-binding positions include 163 to 164 (GE), serine 195, 218 to 220 (SLH), and asparagine 296. The active-site S-methylcysteine intermediate is the cysteine 340.

Belongs to the radical SAM superfamily. RlmN family. The cofactor is [4Fe-4S] cluster.

Its subcellular location is the cytoplasm. It catalyses the reaction adenosine(2503) in 23S rRNA + 2 reduced [2Fe-2S]-[ferredoxin] + 2 S-adenosyl-L-methionine = 2-methyladenosine(2503) in 23S rRNA + 5'-deoxyadenosine + L-methionine + 2 oxidized [2Fe-2S]-[ferredoxin] + S-adenosyl-L-homocysteine. The enzyme catalyses adenosine(37) in tRNA + 2 reduced [2Fe-2S]-[ferredoxin] + 2 S-adenosyl-L-methionine = 2-methyladenosine(37) in tRNA + 5'-deoxyadenosine + L-methionine + 2 oxidized [2Fe-2S]-[ferredoxin] + S-adenosyl-L-homocysteine. Its function is as follows. Specifically methylates position 2 of adenine 2503 in 23S rRNA and position 2 of adenine 37 in tRNAs. The polypeptide is Probable dual-specificity RNA methyltransferase RlmN (Streptococcus equi subsp. zooepidemicus (strain MGCS10565)).